Consider the following 125-residue polypeptide: NADPH-dependent 7-cyano-7-deazaguanine reductase (125 aa).

The Thioimide intermediate role is filled by C41. Catalysis depends on D48, which acts as the Proton donor. Substrate is bound by residues 63 to 65 (IEL) and 82 to 83 (HE).

The protein belongs to the GTP cyclohydrolase I family. QueF type 1 subfamily.

It is found in the cytoplasm. The catalysed reaction is 7-aminomethyl-7-carbaguanine + 2 NADP(+) = 7-cyano-7-deazaguanine + 2 NADPH + 3 H(+). It functions in the pathway tRNA modification; tRNA-queuosine biosynthesis. In terms of biological role, catalyzes the NADPH-dependent reduction of 7-cyano-7-deazaguanine (preQ0) to 7-aminomethyl-7-deazaguanine (preQ1). The protein is NADPH-dependent 7-cyano-7-deazaguanine reductase of Sulfurovum sp. (strain NBC37-1).